The chain runs to 38 residues: Cytochrome b6-f complex subunit 5 (38 aa).

A helical transmembrane segment spans residues 5–25 (LLSGIVLGLIPITLAGLFVTA).

This sequence belongs to the PetG family. As to quaternary structure, the 4 large subunits of the cytochrome b6-f complex are cytochrome b6, subunit IV (17 kDa polypeptide, PetD), cytochrome f and the Rieske protein, while the 4 small subunits are PetG, PetL, PetM and PetN. The complex functions as a dimer.

It is found in the plastid. Its subcellular location is the chloroplast thylakoid membrane. Component of the cytochrome b6-f complex, which mediates electron transfer between photosystem II (PSII) and photosystem I (PSI), cyclic electron flow around PSI, and state transitions. PetG is required for either the stability or assembly of the cytochrome b6-f complex. This chain is Cytochrome b6-f complex subunit 5, found in Adiantum capillus-veneris (Maidenhair fern).